Here is a 159-residue protein sequence, read N- to C-terminus: MAKIKRIITTLVRLLVLGAALSATIVMVTSHDSAEVLNLSFDAKYTNARAFVYFAITNAIASGYSFIALFLSFSTPLWHLVFLLDVFMTLLLTSSISVALAIADVGKKGNSHAGWLPVCGQVPEFCDHVTGALIAGFSAAVLYLVLLLFSIHAVLNPKP.

Residues 1 to 6 lie on the Cytoplasmic side of the membrane; it reads MAKIKR. The helical transmembrane segment at 7–27 threads the bilayer; it reads IITTLVRLLVLGAALSATIVM. The Extracellular portion of the chain corresponds to 28 to 50; sequence VTSHDSAEVLNLSFDAKYTNARA. N-linked (GlcNAc...) asparagine glycosylation occurs at Asn38. Residues 51–73 form a helical membrane-spanning segment; it reads FVYFAITNAIASGYSFIALFLSF. The Cytoplasmic portion of the chain corresponds to 74 to 86; it reads STPLWHLVFLLDV. Residues 87 to 107 form a helical membrane-spanning segment; the sequence is FMTLLLTSSISVALAIADVGK. Over 108–130 the chain is Extracellular; that stretch reads KGNSHAGWLPVCGQVPEFCDHVT. The helical transmembrane segment at 131–151 threads the bilayer; it reads GALIAGFSAAVLYLVLLLFSI. Residues 152–159 lie on the Cytoplasmic side of the membrane; the sequence is HAVLNPKP.

It belongs to the Casparian strip membrane proteins (CASP) family. In terms of assembly, homodimer and heterodimers.

It is found in the cell membrane. The protein is CASP-like protein 1C1 of Vitis vinifera (Grape).